The following is a 358-amino-acid chain: Metacaspase-3 (358 aa).

The tract at residues 1–84 (MGFDFGCLLK…APTHVSGTFR (84 aa)) is important for catalytic activity. Active-site residues include H168 and C223.

This sequence belongs to the peptidase C14B family. In terms of processing, in epimastigotes, the unprocessed enzyme appears to be the main form. Auto-processing is dispensable for catalytic activity towards small oligopeptide substrates.

It localises to the cytoplasm. The protein localises to the nucleus. Activated by Ca(2+). Functionally, cysteine protease that cleaves specifically after arginine or lysine residues. In epimastigotes, may play a role in cell cycle G1/S transition. This Trypanosoma cruzi (strain CL Brener) protein is Metacaspase-3.